A 203-amino-acid polypeptide reads, in one-letter code: Twist-related protein 1 (203 aa).

The span at M1 to S18 shows a compositional bias: low complexity. Residues M1–E106 form a disordered region. Over residues R34–R43 the composition is skewed to basic residues. Composition is skewed to gly residues over residues A46–E65 and G80–S100. The region spanning T109–L160 is the bHLH domain. The segment at Q162–R192 is sufficient for transactivation activity.

In terms of assembly, efficient DNA binding requires dimerization with another bHLH protein. Homodimer or heterodimer with E proteins such as TCF3. ID1 binds preferentially to TCF3 but does not interact efficiently with TWIST1 so ID1 levels control the amount of TCF3 available to dimerize with TWIST and thus determine the type of dimer formed.

The protein localises to the nucleus. Its function is as follows. Acts as a transcriptional regulator. Inhibits myogenesis by sequestrating E proteins, inhibiting trans-activation by MEF2, and inhibiting DNA-binding by MYOD1 through physical interaction. This interaction probably involves the basic domains of both proteins. Also represses expression of pro-inflammatory cytokines such as TNFA and IL1B. Regulates cranial suture patterning and fusion. Activates transcription as a heterodimer with E proteins. Regulates gene expression differentially, depending on dimer composition. Homodimers induce expression of FGFR2 and POSTN while heterodimers repress FGFR2 and POSTN expression and induce THBS1 expression. Heterodimerization is also required for osteoblast differentiation. Represses the activity of the circadian transcriptional activator: NPAS2-BMAL1 heterodimer. The sequence is that of Twist-related protein 1 (TWIST1) from Saguinus oedipus (Cotton-top tamarin).